Here is a 95-residue protein sequence, read N- to C-terminus: Aspartyl/glutamyl-tRNA(Asn/Gln) amidotransferase subunit C (95 aa).

Belongs to the GatC family. As to quaternary structure, heterotrimer of A, B and C subunits.

The catalysed reaction is L-glutamyl-tRNA(Gln) + L-glutamine + ATP + H2O = L-glutaminyl-tRNA(Gln) + L-glutamate + ADP + phosphate + H(+). It catalyses the reaction L-aspartyl-tRNA(Asn) + L-glutamine + ATP + H2O = L-asparaginyl-tRNA(Asn) + L-glutamate + ADP + phosphate + 2 H(+). In terms of biological role, allows the formation of correctly charged Asn-tRNA(Asn) or Gln-tRNA(Gln) through the transamidation of misacylated Asp-tRNA(Asn) or Glu-tRNA(Gln) in organisms which lack either or both of asparaginyl-tRNA or glutaminyl-tRNA synthetases. The reaction takes place in the presence of glutamine and ATP through an activated phospho-Asp-tRNA(Asn) or phospho-Glu-tRNA(Gln). The protein is Aspartyl/glutamyl-tRNA(Asn/Gln) amidotransferase subunit C of Cereibacter sphaeroides (strain ATCC 17023 / DSM 158 / JCM 6121 / CCUG 31486 / LMG 2827 / NBRC 12203 / NCIMB 8253 / ATH 2.4.1.) (Rhodobacter sphaeroides).